A 135-amino-acid chain; its full sequence is Small ribosomal subunit protein bS16 (135 aa).

Residues 82–135 (RPAETVGKAKQAAKREADAKQAAKEAAEAKAAAADEKAAEAEASDSAESESTEG) form a disordered region. A compositionally biased stretch (basic and acidic residues) spans 94 to 121 (AKREADAKQAAKEAAEAKAAAADEKAAE). Positions 123-135 (EASDSAESESTEG) are enriched in acidic residues.

It belongs to the bacterial ribosomal protein bS16 family.

In Synechococcus sp. (strain CC9605), this protein is Small ribosomal subunit protein bS16.